The chain runs to 161 residues: MRCPSCSSLDTQVKDSRPTEDSAVIRRRRVCMACNFRFTTFERVQLRELTVIKRNGRRVPFDRDKLVRSVQISLRKRPVEPEKVEKMVSAIVRELESAGEAEISSEAIGEIVMEHLRKLDDVAYVRFASVYRNFREAKDFEAVLGELSGDEMARLAALRLK.

Positions 1 to 11 (MRCPSCSSLDT) are enriched in polar residues. The tract at residues 1–20 (MRCPSCSSLDTQVKDSRPTE) is disordered. A zinc finger lies at 3–34 (CPSCSSLDTQVKDSRPTEDSAVIRRRRVCMAC). The ATP-cone domain occupies 49–139 (LTVIKRNGRR…VYRNFREAKD (91 aa)).

The protein belongs to the NrdR family. Zn(2+) serves as cofactor.

In terms of biological role, negatively regulates transcription of bacterial ribonucleotide reductase nrd genes and operons by binding to NrdR-boxes. The polypeptide is Transcriptional repressor NrdR (Rhodopseudomonas palustris (strain BisB18)).